The following is a 158-amino-acid chain: MKAVVTRVRSASVVVDDSVVGSIPDSDVGGLLVLIGVATGDTSATARAMAEKLARLRIFEGSTADGRPTEVSALDVDAPMLVVSQFTLMGDTSHGRRPSWSAAAKPAEAEPIFNACVEELRDRGLSVDTGVFGAYMAVESVNDGPFTVLVDIPSGDRS.

The short motif at 144–145 (GP) is the Gly-cisPro motif, important for rejection of L-amino acids element.

Belongs to the DTD family. As to quaternary structure, homodimer.

It is found in the cytoplasm. The enzyme catalyses glycyl-tRNA(Ala) + H2O = tRNA(Ala) + glycine + H(+). The catalysed reaction is a D-aminoacyl-tRNA + H2O = a tRNA + a D-alpha-amino acid + H(+). Its function is as follows. An aminoacyl-tRNA editing enzyme that deacylates mischarged D-aminoacyl-tRNAs. Also deacylates mischarged glycyl-tRNA(Ala), protecting cells against glycine mischarging by AlaRS. Acts via tRNA-based rather than protein-based catalysis; rejects L-amino acids rather than detecting D-amino acids in the active site. By recycling D-aminoacyl-tRNA to D-amino acids and free tRNA molecules, this enzyme counteracts the toxicity associated with the formation of D-aminoacyl-tRNA entities in vivo and helps enforce protein L-homochirality. This is D-aminoacyl-tRNA deacylase from Corynebacterium kroppenstedtii (strain DSM 44385 / JCM 11950 / CIP 105744 / CCUG 35717).